Here is a 374-residue protein sequence, read N- to C-terminus: NAD-capped RNA hydrolase ndx-9 (374 aa).

4 residues coordinate Zn(2+): Cys181, Cys184, Cys199, and Cys202. Residues Tyr207, 243–245, Glu259, Glu263, and Glu307 contribute to the substrate site; that span reads AGF. A Nudix hydrolase domain is found at 208–336; sequence PTFSPVSITL…LADPLLKNLP (129 aa). Mg(2+) contacts are provided by Ala243, Glu259, Glu263, and Glu307. Residues 244–265 carry the Nudix box motif; sequence GFAHSGESMAECARREIAEEVG. The Microbody targeting signal signature appears at 367-369; that stretch reads LEN.

Belongs to the Nudix hydrolase family. NudC subfamily. In terms of assembly, homodimer. Mg(2+) serves as cofactor. Requires Mn(2+) as cofactor. Zn(2+) is required as a cofactor.

The enzyme catalyses a 5'-end NAD(+)-phospho-ribonucleoside in mRNA + H2O = a 5'-end phospho-adenosine-phospho-ribonucleoside in mRNA + beta-nicotinamide D-ribonucleotide + 2 H(+). It carries out the reaction NAD(+) + H2O = beta-nicotinamide D-ribonucleotide + AMP + 2 H(+). The catalysed reaction is NADH + H2O = reduced beta-nicotinamide D-ribonucleotide + AMP + 2 H(+). Its function is as follows. mRNA decapping enzyme that specifically removes the nicotinamide adenine dinucleotide (NAD) cap from a subset of mRNAs by hydrolyzing the diphosphate linkage to produce nicotinamide mononucleotide (NMN) and 5' monophosphate mRNA. The NAD-cap is present at the 5'-end of some RNAs; in contrast to the canonical N7 methylguanosine (m7G) cap, the NAD cap promotes mRNA decay. Mediates the hydrolysis of some nucleoside diphosphate derivatives. In Caenorhabditis elegans, this protein is NAD-capped RNA hydrolase ndx-9 (ndx-9).